A 158-amino-acid chain; its full sequence is 2-C-methyl-D-erythritol 2,4-cyclodiphosphate synthase (158 aa).

Residues aspartate 8 and histidine 10 each coordinate a divalent metal cation. 4-CDP-2-C-methyl-D-erythritol 2-phosphate-binding positions include 8-10 and 34-35; these read DVH and HS. An a divalent metal cation-binding site is contributed by histidine 42. Residues 56–58, 61–65, 132–135, and phenylalanine 139 each bind 4-CDP-2-C-methyl-D-erythritol 2-phosphate; these read DIG, FPDDD, and TTFE.

The protein belongs to the IspF family. As to quaternary structure, homotrimer. Requires a divalent metal cation as cofactor.

It catalyses the reaction 4-CDP-2-C-methyl-D-erythritol 2-phosphate = 2-C-methyl-D-erythritol 2,4-cyclic diphosphate + CMP. The protein operates within isoprenoid biosynthesis; isopentenyl diphosphate biosynthesis via DXP pathway; isopentenyl diphosphate from 1-deoxy-D-xylulose 5-phosphate: step 4/6. In terms of biological role, involved in the biosynthesis of isopentenyl diphosphate (IPP) and dimethylallyl diphosphate (DMAPP), two major building blocks of isoprenoid compounds. Catalyzes the conversion of 4-diphosphocytidyl-2-C-methyl-D-erythritol 2-phosphate (CDP-ME2P) to 2-C-methyl-D-erythritol 2,4-cyclodiphosphate (ME-CPP) with a corresponding release of cytidine 5-monophosphate (CMP). The protein is 2-C-methyl-D-erythritol 2,4-cyclodiphosphate synthase of Natranaerobius thermophilus (strain ATCC BAA-1301 / DSM 18059 / JW/NM-WN-LF).